Consider the following 243-residue polypeptide: MALYTIGEVALLCDINPVTLRAWQRRYGLLKPQRTDGGHRLFNDADIDRIREIKRWIDNGVQVSKVKMLLSNENVDVQNGWRDQQETLLTYLQSGNLHSLRTWIKERGQDYPAQTLTTHLFIPLRRRLQCQQPTLQALLAILDGVLINYIAICLASARKKQGKDALVVGWNIQDTTRLWLEGWIASQQGWRIDVLAHSLNQLRPELFEGRTLLVWCGENRTSAQQQQLTSWQEQGHDIFPLGI.

The HTH merR-type domain occupies 3–72 (LYTIGEVALL…VSKVKMLLSN (70 aa)). The segment at residues 6–25 (IGEVALLCDINPVTLRAWQR) is a DNA-binding region (H-T-H motif).

In terms of assembly, interacts with DgcM and PdeR.

Activity is regulated by DgcM and PdeR. In terms of biological role, activates transcription of csgD, the master regulator of biofilm formation, by binding to its promoter region. Also controls the transcription of cadC and ibaG. Part of a signaling cascade that regulates curli biosynthesis. The cascade is composed of two c-di-GMP control modules, in which c-di-GMP controlled by the DgcE/PdeH pair (module I) regulates the activity of the DgcM/PdeR pair (module II), which in turn regulates activity of the transcription factor MlrA. The polypeptide is HTH-type transcriptional regulator MlrA (Escherichia coli (strain K12)).